Consider the following 286-residue polypeptide: MVAVIIKGNEVAEKKRAQLTEEVVKLKEQGIVPGLAVILVGEDPASRSYVKGKEKGCEQVGIYSELIEFPETITEERLLAEIDRLNGDDRINGILVQLPLPKHIEEKAIIERISPEKDVDGFHPISVGRMMTGQDTFLPCTPHGIVELVKETNLDISGKHVVVIGRSNIVGKPVGQLFLNENATVTYCHSKTQNMKELTKLADILIVAVGRPKMVTADYIKEGAVVIDVGVNRLETGKLCGDVDFDNVLDVAGYITPVPKGVGPMTITMLLHNTVESAKRAGVVCK.

NADP(+) is bound by residues 165–167, serine 190, and valine 231; that span reads GRS.

This sequence belongs to the tetrahydrofolate dehydrogenase/cyclohydrolase family. Homodimer.

The enzyme catalyses (6R)-5,10-methylene-5,6,7,8-tetrahydrofolate + NADP(+) = (6R)-5,10-methenyltetrahydrofolate + NADPH. It carries out the reaction (6R)-5,10-methenyltetrahydrofolate + H2O = (6R)-10-formyltetrahydrofolate + H(+). The protein operates within one-carbon metabolism; tetrahydrofolate interconversion. Catalyzes the oxidation of 5,10-methylenetetrahydrofolate to 5,10-methenyltetrahydrofolate and then the hydrolysis of 5,10-methenyltetrahydrofolate to 10-formyltetrahydrofolate. The protein is Bifunctional protein FolD of Bacillus cereus (strain AH187).